We begin with the raw amino-acid sequence, 247 residues long: MANLFTATAPFLSLSKPFTKTASYHQCYASSSNPPEPESSSPPPPPPPPQPLASQQKRKKNVETTDWVASSLTRRFGIGAGLAWAGFLAFGVISEQIKTRIEVSQEVANTRDVEEEKEIVLPNGIRYYDQRVGGGATPRAGDLVVIDLKGQVQGTGQVFVDTFGTKDKKKMKPLALVVGSKPYSKGLCEGIDYVLRSMKAGGKRRVIVPPSLGFGVDGAELESGLQIPPNASLEYIVEIDRVSIAPA.

A chloroplast-targeting transit peptide spans 1–79 (MANLFTATAP…SSLTRRFGIG (79 aa)). Residues 26-64 (QCYASSSNPPEPESSSPPPPPPPPQPLASQQKRKKNVET) form a disordered region. Pro residues predominate over residues 34–51 (PPEPESSSPPPPPPPPQP). Residues 141–243 (GDLVVIDLKG…EYIVEIDRVS (103 aa)) enclose the PPIase FKBP-type domain.

The protein belongs to the FKBP-type PPIase family.

Its subcellular location is the plastid. The protein resides in the chloroplast thylakoid lumen. The catalysed reaction is [protein]-peptidylproline (omega=180) = [protein]-peptidylproline (omega=0). Its function is as follows. PPIases accelerate the folding of proteins. It catalyzes the cis-trans isomerization of proline imidic peptide bonds in oligopeptides. This chain is Peptidyl-prolyl cis-trans isomerase FKBP17-2, chloroplastic (FKBP17-2), found in Arabidopsis thaliana (Mouse-ear cress).